A 315-amino-acid chain; its full sequence is Peroxidase 4 (315 aa).

The signal sequence occupies residues 1–19 (MAIFKILVLLLSLCCFSQA). Pyrrolidone carboxylic acid is present on Gln-20. 4 cysteine pairs are disulfide-bonded: Cys-30–Cys-110, Cys-63–Cys-68, Cys-116–Cys-311, and Cys-195–Cys-221. The active-site Proton acceptor is His-61. Residues Asp-62, Val-65, Gly-67, Asp-69, and Ser-71 each coordinate Ca(2+). Residue Pro-158 participates in substrate binding. His-188 serves as a coordination point for heme b. Thr-189 is a Ca(2+) binding site. Asn-205 is a glycosylation site (N-linked (GlcNAc...) asparagine). Ca(2+)-binding residues include Asp-234, Thr-237, and Asp-242.

Belongs to the peroxidase family. Classical plant (class III) peroxidase subfamily. Requires heme b as cofactor. Ca(2+) is required as a cofactor.

It is found in the secreted. The enzyme catalyses 2 a phenolic donor + H2O2 = 2 a phenolic radical donor + 2 H2O. In terms of biological role, removal of H(2)O(2), oxidation of toxic reductants, biosynthesis and degradation of lignin, suberization, auxin catabolism, response to environmental stresses such as wounding, pathogen attack and oxidative stress. These functions might be dependent on each isozyme/isoform in each plant tissue. This Arabidopsis thaliana (Mouse-ear cress) protein is Peroxidase 4 (PER4).